Here is a 501-residue protein sequence, read N- to C-terminus: Large ribosomal subunit protein uL2m (501 aa).

Disordered stretches follow at residues 187–217 and 459–501; these read GRERLSPLRGENTFSQSEGQRWKTQSGAPRR and AMNP…KRRN. The segment covering 198–213 has biased composition (polar residues); that stretch reads NTFSQSEGQRWKTQSG. The span at 464 to 474 shows a compositional bias: basic and acidic residues; that stretch reads DHPHGGGEGRT.

It belongs to the universal ribosomal protein uL2 family.

It is found in the mitochondrion. In Marchantia polymorpha (Common liverwort), this protein is Large ribosomal subunit protein uL2m (RPL2).